Here is a 245-residue protein sequence, read N- to C-terminus: Exosome complex component RRP41 (245 aa).

Ala2 is modified (N-acetylalanine).

Belongs to the RNase PH family. As to quaternary structure, component of the RNA exosome core complex (Exo-9), composed of EXOSC1, EXOSC2, EXOSC3, EXOSC4, EXOSC5, EXOSC6, EXOSC7, EXOSC8 and EXOSC9; within the complex interacts with EXOSC2, EXOSC7 and EXOSC9. The catalytically inactive RNA exosome core complex (Exo-9) associates with the catalytic subunit EXOSC10/RRP6. Exo-9 may associate with DIS3 to form the nucleolar exosome complex, or DIS3L to form the cytoplasmic exosome complex. Exo-9 is formed by a hexameric base ring consisting of the heterodimers EXOSC4-EXOSC9, EXOSC5-EXOSC8 and EXOSC6-EXOSC7, and a cap ring consisting of EXOSC1, EXOSC2 and EXOSC3. The RNA exosome complex associates with cofactors C1D/RRP47, MPHOSPH6/MPP6 and MTREX/MTR4. Interacts with DDX60. Interacts with DIS3; the interaction is direct.

The protein localises to the cytoplasm. Its subcellular location is the nucleus. It localises to the nucleolus. It is found in the nucleoplasm. Functionally, non-catalytic component of the RNA exosome complex which has 3'-&gt;5' exoribonuclease activity and participates in a multitude of cellular RNA processing and degradation events. In the nucleus, the RNA exosome complex is involved in proper maturation of stable RNA species such as rRNA, snRNA and snoRNA, in the elimination of RNA processing by-products and non-coding 'pervasive' transcripts, such as antisense RNA species and promoter-upstream transcripts (PROMPTs), and of mRNAs with processing defects, thereby limiting or excluding their export to the cytoplasm. The RNA exosome may be involved in Ig class switch recombination (CSR) and/or Ig variable region somatic hypermutation (SHM) by targeting AICDA deamination activity to transcribed dsDNA substrates. In the cytoplasm, the RNA exosome complex is involved in general mRNA turnover and specifically degrades inherently unstable mRNAs containing AU-rich elements (AREs) within their 3' untranslated regions, and in RNA surveillance pathways, preventing translation of aberrant mRNAs. It seems to be involved in degradation of histone mRNA. The catalytic inactive RNA exosome core complex of 9 subunits (Exo-9) is proposed to play a pivotal role in the binding and presentation of RNA for ribonucleolysis, and to serve as a scaffold for the association with catalytic subunits and accessory proteins or complexes. EXOSC4 binds to ARE-containing RNAs. The chain is Exosome complex component RRP41 (EXOSC4) from Homo sapiens (Human).